Consider the following 614-residue polypeptide: UvrABC system protein C (614 aa).

A GIY-YIG domain is found at 26–104 (NLPGVYKMLG…IKEYRPPYNV (79 aa)). The region spanning 215-250 (SDIHSALIEKMEASAEELDFEKAVFYRDQLSMLREV) is the UVR domain.

This sequence belongs to the UvrC family. Interacts with UvrB in an incision complex.

It is found in the cytoplasm. In terms of biological role, the UvrABC repair system catalyzes the recognition and processing of DNA lesions. UvrC both incises the 5' and 3' sides of the lesion. The N-terminal half is responsible for the 3' incision and the C-terminal half is responsible for the 5' incision. The polypeptide is UvrABC system protein C (Psychrobacter arcticus (strain DSM 17307 / VKM B-2377 / 273-4)).